The chain runs to 117 residues: Aspartate 1-decarboxylase (117 aa).

Residue serine 25 is the Schiff-base intermediate with substrate; via pyruvic acid of the active site. Residue serine 25 is modified to Pyruvic acid (Ser). Residue threonine 57 participates in substrate binding. Tyrosine 58 serves as the catalytic Proton donor. Position 73-75 (73-75 (GAA)) interacts with substrate.

The protein belongs to the PanD family. As to quaternary structure, heterooctamer of four alpha and four beta subunits. The cofactor is pyruvate. Is synthesized initially as an inactive proenzyme, which is activated by self-cleavage at a specific serine bond to produce a beta-subunit with a hydroxyl group at its C-terminus and an alpha-subunit with a pyruvoyl group at its N-terminus.

Its subcellular location is the cytoplasm. The catalysed reaction is L-aspartate + H(+) = beta-alanine + CO2. Its pathway is cofactor biosynthesis; (R)-pantothenate biosynthesis; beta-alanine from L-aspartate: step 1/1. Catalyzes the pyruvoyl-dependent decarboxylation of aspartate to produce beta-alanine. The protein is Aspartate 1-decarboxylase of Thermoanaerobacter pseudethanolicus (strain ATCC 33223 / 39E) (Clostridium thermohydrosulfuricum).